The following is a 1008-amino-acid chain: CRAL-TRIO domain-containing protein C23B6.04c (1008 aa).

Disordered stretches follow at residues 1-247, 284-306, and 374-514; these read MKDS…AKSE, DGRD…DVDS, and QKVV…ASAK. Residues 79 to 110 show a composition bias toward polar residues; sequence TVHTKTGSSSSPASKMRNTVNLQHIQAANQKT. Basic and acidic residues-rich tracts occupy residues 111–131 and 170–187; these read RNAE…KAEA and MNDK…DSKL. Composition is skewed to polar residues over residues 374 to 389, 397 to 432, 467 to 478, and 495 to 505; these read QKVV…STDN, DHPS…TSPK, GGNSVTAPSTPS, and GRSSTAPSTPN. Ser525 and Ser559 each carry phosphoserine. One can recognise a CRAL-TRIO domain in the interval 675–828; the sequence is EIQEENATGK…NFGGSLHFEY (154 aa). The interval 883 to 982 is disordered; sequence SLTNRSSSPT…KSGSGVSETP (100 aa). Residues 885-899 show a composition bias toward low complexity; the sequence is TNRSSSPTVTPTVNT. Phosphoserine occurs at positions 888 and 890. Residues 914–931 show a composition bias toward basic and acidic residues; the sequence is SPQKRRVENPKPVVKDEG.

The protein localises to the cell membrane. This is CRAL-TRIO domain-containing protein C23B6.04c from Schizosaccharomyces pombe (strain 972 / ATCC 24843) (Fission yeast).